A 168-amino-acid polypeptide reads, in one-letter code: Venom nerve growth factor (168 aa).

The signal sequence occupies residues 1-18 (MSMLCYTLIIAFLIGIWA). The propeptide occupies 19-123 (APKSEDNVSL…ADSLNRNIRA (105 aa)). Residue N25 is glycosylated (N-linked (GlcNAc...) asparagine). The interval 48–70 (LKTSQNTDQHSPAPKKAEDQEFG) is disordered. Residue N148 is glycosylated (N-linked (GlcNAc...) asparagine).

This sequence belongs to the NGF-beta family. As to quaternary structure, homodimer; non-covalently linked. Expressed by the venom gland.

It localises to the secreted. Its function is as follows. Nerve growth factor is important for the development and maintenance of the sympathetic and sensory nervous systems. It stimulates division and differentiation of sympathetic and embryonic sensory neurons as well as basal forebrain cholinergic neurons in the brain. Its relevance in the snake venom is not clear. However, it has been shown to inhibit metalloproteinase-dependent proteolysis of platelet glycoprotein Ib alpha, suggesting a metalloproteinase inhibition to prevent metalloprotease autodigestion and/or protection against prey proteases. The polypeptide is Venom nerve growth factor (Echis ocellatus (Ocellated saw-scaled viper)).